A 318-amino-acid chain; its full sequence is Probable tyrosine phosphatase protein N1 (318 aa).

The Tyrosine-protein phosphatase domain occupies 26–292; sequence IVRLEHHQVI…LILQPGYYVL (267 aa). Cysteine 233 serves as the catalytic Phosphocysteine intermediate.

The protein belongs to the protein-tyrosine phosphatase family.

It catalyses the reaction O-phospho-L-tyrosyl-[protein] + H2O = L-tyrosyl-[protein] + phosphate. The chain is Probable tyrosine phosphatase protein N1 (N3) from Microplitis demolitor bracovirus (isolate Webb) (MdBV).